Reading from the N-terminus, the 160-residue chain is Xanthine-guanine phosphoribosyltransferase (160 aa).

Residues arginine 41–glycine 42 and aspartate 93–threonine 101 contribute to the 5-phospho-alpha-D-ribose 1-diphosphate site. Position 94 (aspartate 94) interacts with Mg(2+). The guanine site is built by aspartate 97 and isoleucine 140. 2 residues coordinate xanthine: aspartate 97 and isoleucine 140. Residues aspartate 97–threonine 101 and tryptophan 139–isoleucine 140 contribute to the GMP site.

Belongs to the purine/pyrimidine phosphoribosyltransferase family. XGPT subfamily. In terms of assembly, homotetramer. The cofactor is Mg(2+).

The protein resides in the cell inner membrane. The catalysed reaction is GMP + diphosphate = guanine + 5-phospho-alpha-D-ribose 1-diphosphate. The enzyme catalyses XMP + diphosphate = xanthine + 5-phospho-alpha-D-ribose 1-diphosphate. It catalyses the reaction IMP + diphosphate = hypoxanthine + 5-phospho-alpha-D-ribose 1-diphosphate. The protein operates within purine metabolism; GMP biosynthesis via salvage pathway; GMP from guanine: step 1/1. It functions in the pathway purine metabolism; XMP biosynthesis via salvage pathway; XMP from xanthine: step 1/1. Functionally, purine salvage pathway enzyme that catalyzes the transfer of the ribosyl-5-phosphate group from 5-phospho-alpha-D-ribose 1-diphosphate (PRPP) to the N9 position of the 6-oxopurines guanine and xanthine to form the corresponding ribonucleotides GMP (guanosine 5'-monophosphate) and XMP (xanthosine 5'-monophosphate), with the release of PPi. To a lesser extent, also acts on hypoxanthine. The sequence is that of Xanthine-guanine phosphoribosyltransferase from Desulfotalea psychrophila (strain LSv54 / DSM 12343).